Reading from the N-terminus, the 431-residue chain is Acetylornithine aminotransferase (431 aa).

Residues 118–119 (GA) and Phe157 contribute to the pyridoxal 5'-phosphate site. Arg160 is a binding site for N(2)-acetyl-L-ornithine. 251–254 (DEVQ) is a pyridoxal 5'-phosphate binding site. An N6-(pyridoxal phosphate)lysine modification is found at Lys284. Ser313 provides a ligand contact to N(2)-acetyl-L-ornithine. Thr314 serves as a coordination point for pyridoxal 5'-phosphate.

Belongs to the class-III pyridoxal-phosphate-dependent aminotransferase family. ArgD subfamily. Homodimer. The cofactor is pyridoxal 5'-phosphate.

The protein resides in the cytoplasm. The catalysed reaction is N(2)-acetyl-L-ornithine + 2-oxoglutarate = N-acetyl-L-glutamate 5-semialdehyde + L-glutamate. It functions in the pathway amino-acid biosynthesis; L-arginine biosynthesis; N(2)-acetyl-L-ornithine from L-glutamate: step 4/4. This chain is Acetylornithine aminotransferase, found in Bifidobacterium longum (strain NCC 2705).